The following is a 475-amino-acid chain: Ribulose bisphosphate carboxylase large chain (475 aa).

Residues 1–2 constitute a propeptide that is removed on maturation; sequence MS. P3 is modified (N-acetylproline). K14 carries the post-translational modification N6,N6,N6-trimethyllysine. Positions 123 and 173 each coordinate substrate. The active-site Proton acceptor is K175. K177 lines the substrate pocket. Mg(2+)-binding residues include K201, D203, and E204. The residue at position 201 (K201) is an N6-carboxylysine. The Proton acceptor role is filled by H294. Substrate contacts are provided by R295, H327, and S379.

Belongs to the RuBisCO large chain family. Type I subfamily. In terms of assembly, heterohexadecamer of 8 large chains and 8 small chains; disulfide-linked. The disulfide link is formed within the large subunit homodimers. Requires Mg(2+) as cofactor. The disulfide bond which can form in the large chain dimeric partners within the hexadecamer appears to be associated with oxidative stress and protein turnover.

The protein resides in the plastid. Its subcellular location is the chloroplast. The catalysed reaction is 2 (2R)-3-phosphoglycerate + 2 H(+) = D-ribulose 1,5-bisphosphate + CO2 + H2O. It carries out the reaction D-ribulose 1,5-bisphosphate + O2 = 2-phosphoglycolate + (2R)-3-phosphoglycerate + 2 H(+). Functionally, ruBisCO catalyzes two reactions: the carboxylation of D-ribulose 1,5-bisphosphate, the primary event in carbon dioxide fixation, as well as the oxidative fragmentation of the pentose substrate in the photorespiration process. Both reactions occur simultaneously and in competition at the same active site. The polypeptide is Ribulose bisphosphate carboxylase large chain (Eucalyptus globulus subsp. globulus (Tasmanian blue gum)).